The chain runs to 528 residues: Autophagy-related protein 22 (528 aa).

Residues 1-98 lie on the Cytoplasmic side of the membrane; it reads MSYGTINDMN…IFVDTSSFAL (98 aa). The chain crosses the membrane as a helical span at residues 99-119; the sequence is YVFSLSVLFQTIIVISVSGIV. Residues 120 to 130 lie on the Vacuolar side of the membrane; sequence DLWGSVKFKGR. A helical transmembrane segment spans residues 131-151; the sequence is ILVWFGIVGALSTVAISKLND. Residues 152–153 lie on the Cytoplasmic side of the membrane; it reads TQ. The helical transmembrane segment at 154 to 174 threads the bilayer; the sequence is IYSLAGLYIVANGCFGVINVV. At 175-210 the chain is on the vacuolar side; sequence GNSLLPIFVKDSLKCQSQGAYEPDKVDSLTTVISGR. The helical transmembrane segment at 211-231 threads the bilayer; it reads GASLGYSSALIVQIVSMFLVA. The Cytoplasmic segment spans residues 232–241; the sequence is SKKGSKQDVQ. Residues 242–262 traverse the membrane as a helical segment; that stretch reads VAVLFVGIWWFVWQLPMIWLI. The Vacuolar portion of the chain corresponds to 263 to 318; it reads DDVTIPIRADDSTLASARSPYPGEQDALGQLNWKNYLSYGWVSLFESFKHARLLKD. S278 is subject to Phosphoserine. Residues 319-339 traverse the membrane as a helical segment; sequence VMIFLIAWFIISDSITTINST. Topologically, residues 340-352 are cytoplasmic; that stretch reads AVLFSKAELHMST. Residues 353–373 form a helical membrane-spanning segment; the sequence is LNLIMISVLTVVNAMLGAFMI. Residues 374–388 lie on the Vacuolar side of the membrane; that stretch reads PQFLATKFRWTSSQT. The chain crosses the membrane as a helical span at residues 389–409; the sequence is LMYIIIWASFIPFYGILGFFF. Residues 410–417 lie on the Cytoplasmic side of the membrane; that stretch reads NAFGLKHK. A helical transmembrane segment spans residues 418–438; that stretch reads FEMFLLAIWYGLSLGGLSAVS. Over 439–485 the chain is Vacuolar; the sequence is RSVFSLIVPPGKESTFFSMFSITDKGSSILGPFLVGLLTDKTHNIRY. Residues 486–506 form a helical membrane-spanning segment; it reads SFYFFFLLLMLSLPVLNCLDV. Residues 507-528 are Cytoplasmic-facing; the sequence is KRGRREAEELSQVLPESERRLD.

Belongs to the ATG22 family.

The protein resides in the vacuole membrane. Functionally, vacuolar effluxer which mediate the efflux of amino acids resulting from autophagic degradation. The release of autophagic amino acids allows the maintenance of protein synthesis and viability during nitrogen starvation. The protein is Autophagy-related protein 22 (ATG22) of Saccharomyces cerevisiae (strain YJM789) (Baker's yeast).